A 120-amino-acid polypeptide reads, in one-letter code: uncharacterized protein (120 aa).

The helical transmembrane segment at 93 to 109 threads the bilayer; that stretch reads LCVGISTTMIIQVLFLL.

It is found in the membrane. This is an uncharacterized protein from Saccharomyces cerevisiae (strain ATCC 204508 / S288c) (Baker's yeast).